The following is a 101-amino-acid chain: Small ribosomal subunit protein bS18c (101 aa).

It belongs to the bacterial ribosomal protein bS18 family. As to quaternary structure, part of the 30S ribosomal subunit.

It is found in the plastid. Its subcellular location is the chloroplast. The polypeptide is Small ribosomal subunit protein bS18c (Lepidium virginicum (Virginia pepperweed)).